An 82-amino-acid polypeptide reads, in one-letter code: Acyl carrier protein (82 aa).

The 76-residue stretch at 3–78 folds into the Carrier domain; it reads QEIFERVKKV…KAVEHISEKV (76 aa). S38 bears the O-(pantetheine 4'-phosphoryl)serine mark.

It belongs to the acyl carrier protein (ACP) family. 4'-phosphopantetheine is transferred from CoA to a specific serine of apo-ACP by AcpS. This modification is essential for activity because fatty acids are bound in thioester linkage to the sulfhydryl of the prosthetic group.

Its subcellular location is the cytoplasm. It participates in lipid metabolism; fatty acid biosynthesis. Its function is as follows. Carrier of the growing fatty acid chain in fatty acid biosynthesis. The polypeptide is Acyl carrier protein (Gloeothece citriformis (strain PCC 7424) (Cyanothece sp. (strain PCC 7424))).